A 467-amino-acid polypeptide reads, in one-letter code: Uronate isomerase (467 aa).

This sequence belongs to the metallo-dependent hydrolases superfamily. Uronate isomerase family.

The enzyme catalyses D-glucuronate = D-fructuronate. The catalysed reaction is aldehydo-D-galacturonate = keto-D-tagaturonate. Its pathway is carbohydrate metabolism; pentose and glucuronate interconversion. This Haemophilus influenzae (strain 86-028NP) protein is Uronate isomerase.